Reading from the N-terminus, the 264-residue chain is MIHSKKLTLGICLVLLIILIGGCIIMTKINSRNAQIKDTFNQTLNVYPTKNLDDFYDKEGFRDQEFDKRDKGTWIINSGMYIQLKGGALKSRAMVLYINRNTRTAKGYFLISETTEDKKGYVHNKDKKYPVKMERNRIIPTKPITDEKLKKEIENFKFFVQYGNFKDFKDYKDGDISYNPNVPSYSAKYQLNNDDYNVQQLRKRYDISTKRAPELKLRGSGDLKGSSVGSKELEFNFVRNKEENVYFSDGINFKPTEEMNHEQN.

The first 22 residues, 1 to 22 (MIHSKKLTLGICLVLLIILIGG), serve as a signal peptide directing secretion. Cys23 is lipidated: N-palmitoyl cysteine. Residue Cys23 is the site of S-diacylglycerol cysteine attachment.

The protein belongs to the staphylococcal tandem lipoprotein family.

It localises to the cell membrane. This is an uncharacterized protein from Staphylococcus aureus (strain N315).